A 263-amino-acid polypeptide reads, in one-letter code: Phosphatidylglycerol--prolipoprotein diacylglyceryl transferase (263 aa).

4 helical membrane-spanning segments follow: residues 10 to 30 (VAIT…LFGF), 56 to 76 (MVTY…ILFY), 91 to 111 (IWNG…AMWL), and 117 to 137 (GLGF…GLFF). Arg139 provides a ligand contact to a 1,2-diacyl-sn-glycero-3-phospho-(1'-sn-glycerol). Transmembrane regions (helical) follow at residues 171–191 (PSQL…LWVF), 199–219 (GHVS…VEFV), and 231–251 (FGWL…GLWL).

This sequence belongs to the Lgt family.

The protein resides in the cell inner membrane. The catalysed reaction is L-cysteinyl-[prolipoprotein] + a 1,2-diacyl-sn-glycero-3-phospho-(1'-sn-glycerol) = an S-1,2-diacyl-sn-glyceryl-L-cysteinyl-[prolipoprotein] + sn-glycerol 1-phosphate + H(+). The protein operates within protein modification; lipoprotein biosynthesis (diacylglyceryl transfer). Functionally, catalyzes the transfer of the diacylglyceryl group from phosphatidylglycerol to the sulfhydryl group of the N-terminal cysteine of a prolipoprotein, the first step in the formation of mature lipoproteins. This is Phosphatidylglycerol--prolipoprotein diacylglyceryl transferase from Nitratidesulfovibrio vulgaris (strain ATCC 29579 / DSM 644 / CCUG 34227 / NCIMB 8303 / VKM B-1760 / Hildenborough) (Desulfovibrio vulgaris).